Consider the following 448-residue polypeptide: Methylenetetrahydrofolate--tRNA-(uracil-5-)-methyltransferase TrmFO (448 aa).

13–18 (GAGLAG) provides a ligand contact to FAD.

It belongs to the MnmG family. TrmFO subfamily. FAD serves as cofactor.

Its subcellular location is the cytoplasm. It catalyses the reaction uridine(54) in tRNA + (6R)-5,10-methylene-5,6,7,8-tetrahydrofolate + NADH + H(+) = 5-methyluridine(54) in tRNA + (6S)-5,6,7,8-tetrahydrofolate + NAD(+). The catalysed reaction is uridine(54) in tRNA + (6R)-5,10-methylene-5,6,7,8-tetrahydrofolate + NADPH + H(+) = 5-methyluridine(54) in tRNA + (6S)-5,6,7,8-tetrahydrofolate + NADP(+). Its function is as follows. Catalyzes the folate-dependent formation of 5-methyl-uridine at position 54 (M-5-U54) in all tRNAs. The polypeptide is Methylenetetrahydrofolate--tRNA-(uracil-5-)-methyltransferase TrmFO (Streptococcus pyogenes serotype M4 (strain MGAS10750)).